A 261-amino-acid chain; its full sequence is Snake venom serine protease (261 aa).

Residues 1-20 (MALIGVLANLLILCLSYART) form the signal peptide. The propeptide occupies 21 to 24 (APDR). Residues 25–249 (IIGGLECNQN…YIDWIQDIMA (225 aa)) form the Peptidase S1 domain. Intrachain disulfides connect cysteine 31/cysteine 163, cysteine 50/cysteine 66, cysteine 98/cysteine 256, cysteine 142/cysteine 210, cysteine 174/cysteine 189, and cysteine 200/cysteine 225. Histidine 65 functions as the Charge relay system in the catalytic mechanism. N-linked (GlcNAc...) asparagine glycosylation occurs at asparagine 103. Catalysis depends on aspartate 110, which acts as the Charge relay system. Residues asparagine 117 and asparagine 121 are each glycosylated (N-linked (GlcNAc...) asparagine). Serine 204 functions as the Charge relay system in the catalytic mechanism.

It belongs to the peptidase S1 family. Snake venom subfamily. In terms of assembly, monomer. As to expression, expressed by the venom gland.

Its subcellular location is the secreted. Snake venom serine protease that may act in the hemostasis system of the prey. This chain is Snake venom serine protease, found in Philodryas olfersii (Green snake).